The chain runs to 231 residues: MAKLTKRQKAIAAAVEANKVYTLEEAVQVLNSLPAAKFKESLDISVNLGVDPRKSDQVVRGATTLPAGTGKTVRVAVFAQGAQAEAAKEAGADVVGFDDLAESIQGGNLDFDVVIAAPDAMRVVGKLGTILGPRGLMPNPKVGTVTPDVAGAVKNAKSGQARYRVDKAGIIHAAIGQVGFDAAAIRQNVETLVADLEKLKPATSKGVYIKKITLSSTMGPGLTVDVNNVSN.

It belongs to the universal ribosomal protein uL1 family. In terms of assembly, part of the 50S ribosomal subunit.

In terms of biological role, binds directly to 23S rRNA. The L1 stalk is quite mobile in the ribosome, and is involved in E site tRNA release. Its function is as follows. Protein L1 is also a translational repressor protein, it controls the translation of the L11 operon by binding to its mRNA. The sequence is that of Large ribosomal subunit protein uL1 from Acinetobacter baumannii (strain AB0057).